Reading from the N-terminus, the 118-residue chain is Large ribosomal subunit protein bL19 (118 aa).

This sequence belongs to the bacterial ribosomal protein bL19 family.

Functionally, this protein is located at the 30S-50S ribosomal subunit interface and may play a role in the structure and function of the aminoacyl-tRNA binding site. This chain is Large ribosomal subunit protein bL19, found in Campylobacter curvus (strain 525.92).